Reading from the N-terminus, the 244-residue chain is Putative membrane peptidase YdiL (244 aa).

The next 6 membrane-spanning stretches (helical) occupy residues 7-27, 44-64, 80-100, 127-147, 159-179, and 202-222; these read FIILTYIIMQFSALIAIPLLF, AQGLWSVISFIACLVVVLLIL, IGLSILWAIAGFFIALFSQGI, AVPLMIIVSSIVGPILEEIIF, TNFFFAGLISSVIFGIVHADL, and IWVPIFAHLMMNTFVVIMQLE. Residues Glu143 and His176 each act as proton donor/acceptor in the active site.

The protein belongs to the peptidase U48 family.

Its subcellular location is the cell membrane. In terms of biological role, may function as endopeptidase which proteolytically removes the C-terminal three residues of farnesylated peptides containing the CAAX motif where C is cysteine, A is an aliphatic amino acid and X is any amino acid. The polypeptide is Putative membrane peptidase YdiL (ydiL) (Bacillus subtilis (strain 168)).